A 119-amino-acid chain; its full sequence is Large ribosomal subunit protein uL22c (119 aa).

It belongs to the universal ribosomal protein uL22 family. As to quaternary structure, part of the 50S ribosomal subunit.

Its subcellular location is the plastid. The protein resides in the chloroplast. Functionally, this protein binds specifically to 23S rRNA. The globular domain of the protein is located near the polypeptide exit tunnel on the outside of the subunit, while an extended beta-hairpin is found that lines the wall of the exit tunnel in the center of the 70S ribosome. In Spirogyra maxima (Green alga), this protein is Large ribosomal subunit protein uL22c (rpl22).